The following is a 404-amino-acid chain: Cytochrome b561 and DOMON domain-containing protein At2g04850 (404 aa).

The N-terminal stretch at 1–22 is a signal peptide; that stretch reads MATLILSFLLLLLATKLPESLA. The DOMON domain occupies 43–173; the sequence is QQASIAWTYH…TKIHHVWNRG (131 aa). Residues 180 to 380 enclose the Cytochrome b561 domain; that stretch reads SPTIHPTTST…MEVNSWVVFC (201 aa). The chain crosses the membrane as a helical span at residues 217 to 237; the sequence is VTHGVVNAISWGFLLPAGAVT. Positions 219 and 255 each coordinate heme b. Residues 256-276 traverse the membrane as a helical segment; sequence AAIQLTGFLLGTIGFSIGIVL. Residue H288 participates in heme b binding. The chain crosses the membrane as a helical span at residues 290–310; it reads SLGIATFTAAALQTLALLFRP. H324 contributes to the heme b binding site. Transmembrane regions (helical) follow at residues 326-346 and 359-379; these read FVGY…FEVL and LCLS…WVVF.

Heme b serves as cofactor.

It is found in the membrane. Its function is as follows. May act as a catecholamine-responsive trans-membrane electron transporter. The polypeptide is Cytochrome b561 and DOMON domain-containing protein At2g04850 (Arabidopsis thaliana (Mouse-ear cress)).